Consider the following 270-residue polypeptide: NAD kinase (270 aa).

The active-site Proton acceptor is D45. NAD(+) contacts are provided by residues 45–46 (DG), 121–122 (NE), R147, D149, 160–165 (TAYNKS), and A184.

Belongs to the NAD kinase family. It depends on a divalent metal cation as a cofactor.

The protein resides in the cytoplasm. It carries out the reaction NAD(+) + ATP = ADP + NADP(+) + H(+). Functionally, involved in the regulation of the intracellular balance of NAD and NADP, and is a key enzyme in the biosynthesis of NADP. Catalyzes specifically the phosphorylation on 2'-hydroxyl of the adenosine moiety of NAD to yield NADP. The polypeptide is NAD kinase (Limosilactobacillus reuteri subsp. reuteri (strain JCM 1112) (Lactobacillus reuteri)).